Here is a 201-residue protein sequence, read N- to C-terminus: Sterile alpha motif domain-containing protein 12 (201 aa).

Positions 77–143 (WTQQDVCKWL…LQQVLQLKVR (67 aa)) constitute an SAM domain.

This Pongo abelii (Sumatran orangutan) protein is Sterile alpha motif domain-containing protein 12 (SAMD12).